We begin with the raw amino-acid sequence, 150 residues long: Large ribosomal subunit protein uL15 (150 aa).

Residues 18-43 (IVGRGSSSGWGKTSGKGHKGQQARSG) form a disordered region.

The protein belongs to the universal ribosomal protein uL15 family. Part of the 50S ribosomal subunit.

Binds to the 23S rRNA. The sequence is that of Large ribosomal subunit protein uL15 from Treponema denticola (strain ATCC 35405 / DSM 14222 / CIP 103919 / JCM 8153 / KCTC 15104).